A 128-amino-acid chain; its full sequence is Large ribosomal subunit protein bL12c (128 aa).

The disordered stretch occupies residues 103–128 (QEGLGKDAAEDAKKQIEDAGGKVSLT). The span at 106–122 (LGKDAAEDAKKQIEDAG) shows a compositional bias: basic and acidic residues.

It belongs to the bacterial ribosomal protein bL12 family. Homodimer. Part of the ribosomal stalk of the 50S ribosomal subunit. Forms a multimeric L10(L12)X complex, where L10 forms an elongated spine to which 2 to 4 L12 dimers bind in a sequential fashion. Binds GTP-bound translation factors.

The protein resides in the plastid. The protein localises to the chloroplast. Its function is as follows. Forms part of the ribosomal stalk which helps the ribosome interact with GTP-bound translation factors. Is thus essential for accurate translation. The sequence is that of Large ribosomal subunit protein bL12c from Thalassiosira pseudonana (Marine diatom).